A 336-amino-acid polypeptide reads, in one-letter code: Holliday junction branch migration complex subunit RuvB (336 aa).

The large ATPase domain (RuvB-L) stretch occupies residues 1–184 (MYDEERIVSG…FGIVGHMEYY (184 aa)). ATP-binding positions include Leu23, Arg24, Gly65, Lys68, Thr69, Thr70, 131 to 133 (EDY), Arg174, Tyr184, and Arg221. Thr69 contacts Mg(2+). A small ATPAse domain (RuvB-S) region spans residues 185-255 (NEVDLSQIIK…IVQFALDLLR (71 aa)). A head domain (RuvB-H) region spans residues 258–336 (KVGLDRTDRK…HLGIKYNKEG (79 aa)). DNA-binding residues include Arg313 and Arg318.

Belongs to the RuvB family. As to quaternary structure, homohexamer. Forms an RuvA(8)-RuvB(12)-Holliday junction (HJ) complex. HJ DNA is sandwiched between 2 RuvA tetramers; dsDNA enters through RuvA and exits via RuvB. An RuvB hexamer assembles on each DNA strand where it exits the tetramer. Each RuvB hexamer is contacted by two RuvA subunits (via domain III) on 2 adjacent RuvB subunits; this complex drives branch migration. In the full resolvosome a probable DNA-RuvA(4)-RuvB(12)-RuvC(2) complex forms which resolves the HJ.

It is found in the cytoplasm. It carries out the reaction ATP + H2O = ADP + phosphate + H(+). The RuvA-RuvB-RuvC complex processes Holliday junction (HJ) DNA during genetic recombination and DNA repair, while the RuvA-RuvB complex plays an important role in the rescue of blocked DNA replication forks via replication fork reversal (RFR). RuvA specifically binds to HJ cruciform DNA, conferring on it an open structure. The RuvB hexamer acts as an ATP-dependent pump, pulling dsDNA into and through the RuvAB complex. RuvB forms 2 homohexamers on either side of HJ DNA bound by 1 or 2 RuvA tetramers; 4 subunits per hexamer contact DNA at a time. Coordinated motions by a converter formed by DNA-disengaged RuvB subunits stimulates ATP hydrolysis and nucleotide exchange. Immobilization of the converter enables RuvB to convert the ATP-contained energy into a lever motion, pulling 2 nucleotides of DNA out of the RuvA tetramer per ATP hydrolyzed, thus driving DNA branch migration. The RuvB motors rotate together with the DNA substrate, which together with the progressing nucleotide cycle form the mechanistic basis for DNA recombination by continuous HJ branch migration. Branch migration allows RuvC to scan DNA until it finds its consensus sequence, where it cleaves and resolves cruciform DNA. This is Holliday junction branch migration complex subunit RuvB from Ligilactobacillus salivarius (strain UCC118) (Lactobacillus salivarius).